The sequence spans 386 residues: bHLH transcription factor RHL1 (386 aa).

The interval 119 to 186 (FTGSLNGTQP…RRGQATDPHS (68 aa)) is disordered. Positions 127-137 (QPQQHFQHPPQ) are enriched in low complexity. Residues 138–151 (GNSNQIQGQNFGAT) show a composition bias toward polar residues. The segment at 180 to 193 (QATDPHSIAERLRR) is basic motif; degenerate. The bHLH domain occupies 180 to 229 (QATDPHSIAERLRRERIAERMKALQELVPNANKTDKASMLDEIIDYVKFL). The interval 194–229 (ERIAERMKALQELVPNANKTDKASMLDEIIDYVKFL) is helix-loop-helix motif.

As to expression, expressed in root epidermal cells.

It localises to the nucleus. In terms of biological role, transcription factor that regulates the development of root hairs. The chain is bHLH transcription factor RHL1 from Lotus japonicus (Lotus corniculatus var. japonicus).